Here is a 397-residue protein sequence, read N- to C-terminus: Anhydro-N-acetylmuramic acid kinase (397 aa).

Residue 21 to 28 participates in ATP binding; that stretch reads GTSLDGVD. The segment covering 373-384 has biased composition (polar residues); that stretch reads TPTNLPSVTGAS. Positions 373 to 397 are disordered; it reads TPTNLPSVTGASARTPLGSLSVPGP.

This sequence belongs to the anhydro-N-acetylmuramic acid kinase family.

The catalysed reaction is 1,6-anhydro-N-acetyl-beta-muramate + ATP + H2O = N-acetyl-D-muramate 6-phosphate + ADP + H(+). Its pathway is amino-sugar metabolism; 1,6-anhydro-N-acetylmuramate degradation. The protein operates within cell wall biogenesis; peptidoglycan recycling. In terms of biological role, catalyzes the specific phosphorylation of 1,6-anhydro-N-acetylmuramic acid (anhMurNAc) with the simultaneous cleavage of the 1,6-anhydro ring, generating MurNAc-6-P. Is required for the utilization of anhMurNAc either imported from the medium or derived from its own cell wall murein, and thus plays a role in cell wall recycling. This is Anhydro-N-acetylmuramic acid kinase from Salinibacter ruber (strain DSM 13855 / M31).